The sequence spans 622 residues: MRKLYCVLLLSAFEFTYMINFGRGQNYWEHPYQNSDVYRPINEHREHPKEYEYPLLQEHTYQQEDSGEDENTLQHAYPIDHEGAEPAPQEQNLFSSIEIVERSNYMGNPWTEYMAKYDIEKVHGSGIRVDLGEDAEVAGTQYRLPSGKCPVFGKGIIIENSKTTFLTPVATENQDLKDGGFAFPPTEPLISPMTLDQMRHLYKDNEYVKNLDELTLCSRHAGNMNPDNDKNSNYKYPAVYDYEDKKCHILYIAAQENNGPRYCNKDESKRNSMFCFRPAKDKLFENYTYLSKNVVDNWEEVCPRKNLENAKFGLWVDGNCEDIPHVNEFSANDLFECNKLVFELSASDQPKQYEQHLTDYEKIKEGFKNKNASMIKSAFLPTGAFKADRYKSRGKGYNWGNYNTETQKCEIFNVKPTCLINNSSYIATTALSHPNEVENNFPCSLYKDEIKKEIERESKRIKLNDNDDEGNKKIIAPRIFISDDKDSLKCPCDPEIVSNSTCNFFVCKCVEKRAEVTSNNEVVVKEEYKDEYADIPEHKPTYDNMKIIIASSAAVAVLATILMVYLYKRKGNAEKYDKMDEPQDYGKSTSRNDEMLDPEASFWGEEKRASHTTPVLMEKPYY.

The N-terminal stretch at 1 to 24 (MRKLYCVLLLSAFEFTYMINFGRG) is a signal peptide. Residues 25 to 546 (QNYWEHPYQN…EHKPTYDNMK (522 aa)) are Extracellular-facing. Cystine bridges form between C149–C302, C217–C247, C263–C275, C320–C418, and C337–C409. 5 N-linked (GlcNAc...) asparagine glycosylation sites follow: N286, N371, N421, N422, and N499. Cystine bridges form between C443–C502, C490–C507, and C492–C509. Residues 547–567 (IIIASSAAVAVLATILMVYLY) form a helical membrane-spanning segment. At 568-622 (KRKGNAEKYDKMDEPQDYGKSTSRNDEMLDPEASFWGEEKRASHTTPVLMEKPYY) the chain is on the cytoplasmic side. Positions 577-607 (DKMDEPQDYGKSTSRNDEMLDPEASFWGEEK) are disordered.

The protein belongs to the apicomplexan parasites AMA1 family.

Its subcellular location is the membrane. Functionally, involved in parasite invasion of erythrocytes. In Plasmodium falciparum (isolate thtn / Thailand), this protein is Apical membrane antigen 1 (AMA-1).